Reading from the N-terminus, the 178-residue chain is MDKKQYAIIEKYALPFVQTVFEKGQQEDVFEKLSQIKAVFAETGLADFLSHIGISDHEKEKSLRLFQNSGSQLLDNLIEIVILNHREDLFYEIVLESQHQLEKISNEFEVTLRSVQPLTASQKEKIRPIIEQKMGLKVRSLKEELDSSLIGGFVISANNKTIDASIKRQLQVIKEKLK.

This sequence belongs to the ATPase delta chain family. F-type ATPases have 2 components, F(1) - the catalytic core - and F(0) - the membrane proton channel. F(1) has five subunits: alpha(3), beta(3), gamma(1), delta(1), epsilon(1). F(0) has three main subunits: a(1), b(2) and c(10-14). The alpha and beta chains form an alternating ring which encloses part of the gamma chain. F(1) is attached to F(0) by a central stalk formed by the gamma and epsilon chains, while a peripheral stalk is formed by the delta and b chains.

It is found in the cell membrane. In terms of biological role, f(1)F(0) ATP synthase produces ATP from ADP in the presence of a proton or sodium gradient. F-type ATPases consist of two structural domains, F(1) containing the extramembraneous catalytic core and F(0) containing the membrane proton channel, linked together by a central stalk and a peripheral stalk. During catalysis, ATP synthesis in the catalytic domain of F(1) is coupled via a rotary mechanism of the central stalk subunits to proton translocation. Its function is as follows. This protein is part of the stalk that links CF(0) to CF(1). It either transmits conformational changes from CF(0) to CF(1) or is implicated in proton conduction. The polypeptide is ATP synthase subunit delta (Streptococcus sanguinis (strain SK36)).